A 125-amino-acid chain; its full sequence is Phosphoribosyl-AMP cyclohydrolase (125 aa).

Aspartate 74 provides a ligand contact to Mg(2+). Cysteine 75 provides a ligand contact to Zn(2+). Mg(2+)-binding residues include aspartate 76 and aspartate 78. 2 residues coordinate Zn(2+): cysteine 92 and cysteine 99.

Belongs to the PRA-CH family. In terms of assembly, homodimer. Mg(2+) is required as a cofactor. Requires Zn(2+) as cofactor.

Its subcellular location is the cytoplasm. It carries out the reaction 1-(5-phospho-beta-D-ribosyl)-5'-AMP + H2O = 1-(5-phospho-beta-D-ribosyl)-5-[(5-phospho-beta-D-ribosylamino)methylideneamino]imidazole-4-carboxamide. The protein operates within amino-acid biosynthesis; L-histidine biosynthesis; L-histidine from 5-phospho-alpha-D-ribose 1-diphosphate: step 3/9. Its function is as follows. Catalyzes the hydrolysis of the adenine ring of phosphoribosyl-AMP. This chain is Phosphoribosyl-AMP cyclohydrolase, found in Pelobacter propionicus (strain DSM 2379 / NBRC 103807 / OttBd1).